Reading from the N-terminus, the 339-residue chain is Cyclic AMP-dependent transcription factor ATF-4 (339 aa).

Disordered stretches follow at residues 14 to 62 (GPWP…PSEL), 153 to 182 (PEEIKSEPLSPAPSVPSPPEEAPQDEHTEV), and 209 to 313 (QNIS…EKAD). Residues 35-55 (VLEGSWSPSSSSLSSFSPPAS) show a composition bias toward low complexity. Residues 162–173 (SPAPSVPSPPEE) show a composition bias toward pro residues. The segment covering 211-226 (ISDCSDSDSGISVSGS) has biased composition (low complexity). Residues 231–247 (SDLEPSSRAKPYSRPDP) are compositionally biased toward basic and acidic residues. One can recognise a bZIP domain in the interval 266–329 (VEKKLKKMEQ…QYLRDLLEEM (64 aa)). The tract at residues 268-288 (KKLKKMEQNKTAATRYRQKKR) is basic motif. Positions 294 to 322 (LNSECSELEKKNRELSEKADSLSREIQYL) are leucine-zipper. Basic and acidic residues predominate over residues 300-313 (ELEKKNRELSEKAD).

This sequence belongs to the bZIP family. In terms of assembly, binds DNA as a homodimer and as a heterodimer.

The protein localises to the nucleus. Functionally, transcription factor that binds the cAMP response element (CRE) (consensus: 5'-GTGACGT[AC][AG]-3') and displays two biological functions, as regulator of metabolic and redox processes under normal cellular conditions, and as master transcription factor during integrated stress response (ISR). Binds to asymmetric CRE's as a heterodimer and to palindromic CRE's as a homodimer. Core effector of the ISR, which is required for adaptation to various stress such as endoplasmic reticulum (ER) stress, amino acid starvation, mitochondrial stress or oxidative stress. During ISR, atf4 translation is induced via an alternative ribosome translation re-initiation mechanism in response to eif2s1/eIF-2-alpha phosphorylation, and stress-induced atf4 acts as a master transcription factor of stress-responsive genes in order to promote cell recovery. Promotes the transcription of genes linked to amino acid sufficiency and resistance to oxidative stress to protect cells against metabolic consequences of ER oxidation. In the absence of stress, atf4 translation is at low levels and it is required for normal metabolic processes such as embryonic lens formation, fetal liver hematopoiesis, bone development and synaptic plasticity. Acts as a regulator of osteoblast differentiation by promoting expression of osteoblast-specific genes. Regulates the circadian expression of the core clock components. Mainly acts as a transcriptional activator in cellular stress adaptation, but it can also act as a transcriptional repressor. This is Cyclic AMP-dependent transcription factor ATF-4 (atf4) from Danio rerio (Zebrafish).